Here is a 74-residue protein sequence, read N- to C-terminus: Exodeoxyribonuclease 7 small subunit (74 aa).

Belongs to the XseB family. As to quaternary structure, heterooligomer composed of large and small subunits.

The protein localises to the cytoplasm. It carries out the reaction Exonucleolytic cleavage in either 5'- to 3'- or 3'- to 5'-direction to yield nucleoside 5'-phosphates.. In terms of biological role, bidirectionally degrades single-stranded DNA into large acid-insoluble oligonucleotides, which are then degraded further into small acid-soluble oligonucleotides. The polypeptide is Exodeoxyribonuclease 7 small subunit (Actinobacillus pleuropneumoniae serotype 5b (strain L20)).